Reading from the N-terminus, the 89-residue chain is MALTAEEKQEIIKTYATHEGDTGSPEVQVALLTKRIADLTEHLKEHKHDHHSRRGLLLMVGDRRRMLDYLKRVDINRYRSLIERLGLRR.

The protein belongs to the universal ribosomal protein uS15 family. In terms of assembly, part of the 30S ribosomal subunit. Forms a bridge to the 50S subunit in the 70S ribosome, contacting the 23S rRNA.

In terms of biological role, one of the primary rRNA binding proteins, it binds directly to 16S rRNA where it helps nucleate assembly of the platform of the 30S subunit by binding and bridging several RNA helices of the 16S rRNA. Forms an intersubunit bridge (bridge B4) with the 23S rRNA of the 50S subunit in the ribosome. The sequence is that of Small ribosomal subunit protein uS15 from Bifidobacterium adolescentis (strain ATCC 15703 / DSM 20083 / NCTC 11814 / E194a).